The chain runs to 186 residues: Ribosome-recycling factor (186 aa).

Belongs to the RRF family.

The protein resides in the cytoplasm. Functionally, responsible for the release of ribosomes from messenger RNA at the termination of protein biosynthesis. May increase the efficiency of translation by recycling ribosomes from one round of translation to another. This chain is Ribosome-recycling factor, found in Rickettsia typhi (strain ATCC VR-144 / Wilmington).